The primary structure comprises 146 residues: Cell division protein SepF (146 aa).

It belongs to the SepF family. Homodimer. Interacts with FtsZ.

Its subcellular location is the cytoplasm. Its function is as follows. Cell division protein that is part of the divisome complex and is recruited early to the Z-ring. Probably stimulates Z-ring formation, perhaps through the cross-linking of FtsZ protofilaments. Its function overlaps with FtsA. The protein is Cell division protein SepF of Alkaliphilus oremlandii (strain OhILAs) (Clostridium oremlandii (strain OhILAs)).